A 290-amino-acid polypeptide reads, in one-letter code: 4-diphosphocytidyl-2-C-methyl-D-erythritol kinase (290 aa).

Residue Lys14 is part of the active site. Residue 103–113 (PMGGGLGGGSS) coordinates ATP. Asp145 is a catalytic residue.

The protein belongs to the GHMP kinase family. IspE subfamily. Homodimer.

The catalysed reaction is 4-CDP-2-C-methyl-D-erythritol + ATP = 4-CDP-2-C-methyl-D-erythritol 2-phosphate + ADP + H(+). It functions in the pathway isoprenoid biosynthesis; isopentenyl diphosphate biosynthesis via DXP pathway; isopentenyl diphosphate from 1-deoxy-D-xylulose 5-phosphate: step 3/6. Its function is as follows. Catalyzes the phosphorylation of the position 2 hydroxy group of 4-diphosphocytidyl-2C-methyl-D-erythritol. The protein is 4-diphosphocytidyl-2-C-methyl-D-erythritol kinase of Pectobacterium carotovorum subsp. carotovorum (strain PC1).